The sequence spans 182 residues: Large ribosomal subunit protein uL6 (182 aa).

It belongs to the universal ribosomal protein uL6 family. Part of the 50S ribosomal subunit.

Its function is as follows. This protein binds to the 23S rRNA, and is important in its secondary structure. It is located near the subunit interface in the base of the L7/L12 stalk, and near the tRNA binding site of the peptidyltransferase center. The protein is Large ribosomal subunit protein uL6 of Karelsulcia muelleri (strain GWSS) (Sulcia muelleri).